The sequence spans 388 residues: tRNA(Ile)-lysidine synthase (388 aa).

51–56 (SGGRDS) is a binding site for ATP.

This sequence belongs to the tRNA(Ile)-lysidine synthase family.

Its subcellular location is the cytoplasm. The catalysed reaction is cytidine(34) in tRNA(Ile2) + L-lysine + ATP = lysidine(34) in tRNA(Ile2) + AMP + diphosphate + H(+). Ligates lysine onto the cytidine present at position 34 of the AUA codon-specific tRNA(Ile) that contains the anticodon CAU, in an ATP-dependent manner. Cytidine is converted to lysidine, thus changing the amino acid specificity of the tRNA from methionine to isoleucine. In Bifidobacterium longum (strain NCC 2705), this protein is tRNA(Ile)-lysidine synthase.